The chain runs to 490 residues: Probable glycine dehydrogenase (decarboxylating) subunit 2 (490 aa).

Lys-273 bears the N6-(pyridoxal phosphate)lysine mark.

It belongs to the GcvP family. C-terminal subunit subfamily. The glycine cleavage system is composed of four proteins: P, T, L and H. In this organism, the P 'protein' is a heterodimer of two subunits. It depends on pyridoxal 5'-phosphate as a cofactor.

The catalysed reaction is N(6)-[(R)-lipoyl]-L-lysyl-[glycine-cleavage complex H protein] + glycine + H(+) = N(6)-[(R)-S(8)-aminomethyldihydrolipoyl]-L-lysyl-[glycine-cleavage complex H protein] + CO2. Functionally, the glycine cleavage system catalyzes the degradation of glycine. The P protein binds the alpha-amino group of glycine through its pyridoxal phosphate cofactor; CO(2) is released and the remaining methylamine moiety is then transferred to the lipoamide cofactor of the H protein. The chain is Probable glycine dehydrogenase (decarboxylating) subunit 2 from Staphylococcus aureus (strain bovine RF122 / ET3-1).